The chain runs to 499 residues: MEFLKQLEVWFVVGSQHLYGAETLKQVADHAQTITNQLNEKAGLPLKIVLKPTGTTLDEISAIARDANHSEQCVGVMVWMHTFSPAKMWIPALSQLNKPLLQFHTQFNKDLPWGEIDMDFMNLNQTAHGGREFGFMGARLRLPRTVVVGYWEDKGAHEKIARWMRIAAAVYDSRKMKVARFGDNMRNVAVTEGDKVEAQIQFGYQVNYHPVGDLVKVINDVSTGDINALLDEYETIYTLTDAVKMGGAYRESLYEAARQELGMKKFLQDGGFGAFTTTFEDLYGIHQLPGLACQRLMQQGYGFGGEGDWKTAALLRTLKVMGTGLPGGTSFMEDYTYHLEDGNNLVLGAHMLEVCPSIASKKPVLDVQRLGIGQKAPPARLLFSAPAGKAVNASLIDMGNRFRLVVNNLDVVDLPQSLPKLPVACALWEPKPNLEVGAEAWILAGAAHHSVFSQAVDAEYLRTFAEMMGIEFLLIDENTTIPELKKEILWNEVYYKLCK.

Residues glutamate 306, glutamate 333, histidine 350, and histidine 449 each coordinate Mn(2+).

It belongs to the arabinose isomerase family. It depends on Mn(2+) as a cofactor.

It carries out the reaction beta-L-arabinopyranose = L-ribulose. Its pathway is carbohydrate degradation; L-arabinose degradation via L-ribulose; D-xylulose 5-phosphate from L-arabinose (bacterial route): step 1/3. Catalyzes the conversion of L-arabinose to L-ribulose. The protein is L-arabinose isomerase of Tolumonas auensis (strain DSM 9187 / NBRC 110442 / TA 4).